Here is a 362-residue protein sequence, read N- to C-terminus: Poly(rC)-binding protein 2 (362 aa).

2 consecutive KH domains span residues Thr13 to Ile75 and Pro97 to Ile162. Residue Lys115 forms a Glycyl lysine isopeptide (Lys-Gly) (interchain with G-Cter in SUMO2) linkage. Ser169 bears the Phosphoserine mark. Lys181 participates in a covalent cross-link: Glycyl lysine isopeptide (Lys-Gly) (interchain with G-Cter in SUMO2). Phosphoserine occurs at positions 185 and 268. The KH 3 domain occupies Thr284–Ile348. Lys319 is covalently cross-linked (Glycyl lysine isopeptide (Lys-Gly) (interchain with G-Cter in SUMO2)). Phosphoserine is present on residues Ser361 and Ser362.

In terms of assembly, identified in a mRNP complex, at least composed of DHX9, DDX3X, ELAVL1, HNRNPU, IGF2BP1, ILF3, PABPC1, PCBP2, PTBP2, STAU1, STAU2, SYNCRIP and YBX1. Interacts with IFIH1 and RNF135. Interacts with MAVS (via C-terminus) and ITCH (via WW domains). Interacts with CGAS; preventing the formation of liquid-like droplets in which CGAS is activated. Phosphorylated. The non-phosphorylated form(s) exhibited the strongest poly(rC)-binding activity.

Its subcellular location is the nucleus. It localises to the cytoplasm. Single-stranded nucleic acid binding protein that binds preferentially to oligo dC. Major cellular poly(rC)-binding protein. Also binds poly(rU). Acts as a negative regulator of antiviral signaling. Negatively regulates cellular antiviral responses mediated by MAVS signaling. It acts as an adapter between MAVS and the E3 ubiquitin ligase ITCH, therefore triggering MAVS ubiquitination and degradation. Negativeley regulates the cGAS-STING pathway via interaction with CGAS, preventing the formation of liquid-like droplets in which CGAS is activated. Together with PCBP1, required for erythropoiesis, possibly by regulating mRNA splicing. The sequence is that of Poly(rC)-binding protein 2 (Pcbp2) from Mus musculus (Mouse).